The sequence spans 476 residues: Bifunctional protein HldE (476 aa).

Residues 1–318 (MKPILPDYNS…AEAVHGSQDT (318 aa)) are ribokinase. 195-198 (NMKE) serves as a coordination point for ATP. Residue D264 is part of the active site. The segment at 344 to 476 (MTNGCFDILH…IINAIKGGKG (133 aa)) is cytidylyltransferase.

This sequence in the N-terminal section; belongs to the carbohydrate kinase PfkB family. It in the C-terminal section; belongs to the cytidylyltransferase family. In terms of assembly, homodimer.

The enzyme catalyses D-glycero-beta-D-manno-heptose 7-phosphate + ATP = D-glycero-beta-D-manno-heptose 1,7-bisphosphate + ADP + H(+). The catalysed reaction is D-glycero-beta-D-manno-heptose 1-phosphate + ATP + H(+) = ADP-D-glycero-beta-D-manno-heptose + diphosphate. The protein operates within nucleotide-sugar biosynthesis; ADP-L-glycero-beta-D-manno-heptose biosynthesis; ADP-L-glycero-beta-D-manno-heptose from D-glycero-beta-D-manno-heptose 7-phosphate: step 1/4. It functions in the pathway nucleotide-sugar biosynthesis; ADP-L-glycero-beta-D-manno-heptose biosynthesis; ADP-L-glycero-beta-D-manno-heptose from D-glycero-beta-D-manno-heptose 7-phosphate: step 3/4. Its pathway is bacterial outer membrane biogenesis; LPS core biosynthesis. Catalyzes the phosphorylation of D-glycero-D-manno-heptose 7-phosphate at the C-1 position to selectively form D-glycero-beta-D-manno-heptose-1,7-bisphosphate. Functionally, catalyzes the ADP transfer from ATP to D-glycero-beta-D-manno-heptose 1-phosphate, yielding ADP-D-glycero-beta-D-manno-heptose. The chain is Bifunctional protein HldE from Vibrio parahaemolyticus serotype O3:K6 (strain RIMD 2210633).